We begin with the raw amino-acid sequence, 348 residues long: Enkurin domain-containing protein 1 (348 aa).

3 disordered regions span residues 1–65 (MCEG…RPGG), 84–195 (GGIS…PSAK), and 262–282 (AEAR…TRMP). S93 bears the Phosphoserine mark. Basic and acidic residues predominate over residues 95-127 (KRKDPKDHEKENMRRIREIQRRFREQEHSREQG). S138 is modified (phosphoserine). The segment covering 139-148 (PKYDKVESRV) has biased composition (basic and acidic residues). The region spanning 253-345 (ERRDLWRREA…IFSRPKVFVK (93 aa)) is the Enkurin domain.

Interacts with alpha-tubulin. Interacts (via central region) with CCP110 (via N-terminal region); competes with CEP97 for binding to CCP110.

It is found in the cytoplasm. Its subcellular location is the cytoskeleton. The protein resides in the microtubule organizing center. The protein localises to the centrosome. It localises to the centriole. It is found in the cilium basal body. Its subcellular location is the cell projection. The protein resides in the cilium. The protein localises to the spindle. It localises to the spindle pole. It is found in the cilium axoneme. Its function is as follows. Microtubule-binding protein which regulates microtubule organization and stability. Promotes the stability of astral microtubules and facilitates the proper orientation of the mitotic spindle. This allows the oriented division of basal keratinocytes and contributes to epidermal stratification. Required for the assembly of both primary and motile cilia. Destabilizes the interaction between CCP110 and CEP97 by competing with CEP97 for binding to CCP110 which promotes the removal of CCP110 and CEP97 from the mother centriole and allows the initiation of ciliogenesis. The protein is Enkurin domain-containing protein 1 (ENKD1) of Bos taurus (Bovine).